A 1173-amino-acid chain; its full sequence is Pleckstrin homology domain-containing family A member 6 (1173 aa).

Residues M1 to M22 show a composition bias toward polar residues. The disordered stretch occupies residues M1–S39. One can recognise a PH domain in the interval P59–R158. The segment at P163–R346 is disordered. The span at L201–L233 shows a compositional bias: basic and acidic residues. Residues S247 and S251 each carry the phosphoserine modification. 2 stretches are compositionally biased toward polar residues: residues N270 to G281 and R311 to V322. S314, S459, S461, and S472 each carry phosphoserine. The residue at position 492 (Y492) is a Phosphotyrosine. S665 is subject to Phosphoserine. 2 disordered regions span residues R737–I872 and A888–Y984. Composition is skewed to low complexity over residues S761–S782 and G789–E799. A compositionally biased stretch (pro residues) spans E815–P824. S864 is subject to Phosphoserine. The residue at position 868 (T868) is a Phosphothreonine. The residue at position 901 (S901) is a Phosphoserine. T908 carries the post-translational modification Phosphothreonine. Residues R915 to S926 show a composition bias toward polar residues. Residue S925 is modified to Phosphoserine. The span at G940–R952 shows a compositional bias: basic and acidic residues. Residues M953 to S967 are compositionally biased toward basic residues. 3 positions are modified to phosphoserine: S973, S979, and S992. Position 1045 is a phosphothreonine (T1045). S1065 bears the Phosphoserine mark. Disordered stretches follow at residues P1093–E1114 and R1130–V1173. The residue at position 1140 (T1140) is a Phosphothreonine. Over residues P1141–N1155 the composition is skewed to pro residues. S1142 carries the phosphoserine modification. A Phosphothreonine modification is found at T1145. Residues S1146 and S1149 each carry the phosphoserine modification. T1151 is modified (phosphothreonine).

The polypeptide is Pleckstrin homology domain-containing family A member 6 (Plekha6) (Mus musculus (Mouse)).